We begin with the raw amino-acid sequence, 310 residues long: N-acetyl-gamma-glutamyl-phosphate reductase (310 aa).

Cysteine 117 is an active-site residue.

The protein belongs to the NAGSA dehydrogenase family. Type 2 subfamily.

It is found in the cytoplasm. It catalyses the reaction N-acetyl-L-glutamate 5-semialdehyde + phosphate + NADP(+) = N-acetyl-L-glutamyl 5-phosphate + NADPH + H(+). The protein operates within amino-acid biosynthesis; L-arginine biosynthesis; N(2)-acetyl-L-ornithine from L-glutamate: step 3/4. In terms of biological role, catalyzes the NADPH-dependent reduction of N-acetyl-5-glutamyl phosphate to yield N-acetyl-L-glutamate 5-semialdehyde. The protein is N-acetyl-gamma-glutamyl-phosphate reductase of Allorhizobium ampelinum (strain ATCC BAA-846 / DSM 112012 / S4) (Agrobacterium vitis (strain S4)).